Consider the following 1198-residue polypeptide: Regulator of G-protein signaling 3 (1198 aa).

Residues 137–256 (GAGQLRLSID…TPDKEISGWY (120 aa)) form the C2 domain. A PDZ domain is found at 299-376 (KITIPRGKDG…EIILLVWRMV (78 aa)). An Omega-N-methylarginine modification is found at R448. A disordered region spans residues 669-933 (QQLAASPPDS…GAEGGLSLRV (265 aa)). At S674 the chain carries Phosphoserine. The segment covering 679 to 697 (KMFETEADEKREMALEEGK) has biased composition (basic and acidic residues). Positions 739–751 (EPLSSKDSATSEG) are enriched in polar residues. A compositionally biased stretch (pro residues) spans 753-773 (PPGPDAPPSKDVPPCQEPPPA). Over residues 877–906 (GDEEDAEEAEEVEEGEEGEEDEDEDTSDDN) the composition is skewed to acidic residues. A compositionally biased stretch (basic and acidic residues) spans 907-917 (YGERSEAKRSS). S943, S946, S978, and S1007 each carry phosphoserine. 2 disordered regions span residues 1007-1026 (SGAD…KSKN) and 1032-1056 (KNKL…ADKM). The RGS domain maps to 1073-1198 (SLEKLLVHKY…INQKKMSPPL (126 aa)).

Binds EFNB1 and EFNB2. Binds the GNB1-GNG2 heterodimer. Phosphorylated by cyclic GMP-dependent protein kinase. Post-translationally, ISGylated.

It localises to the cytoplasm. The protein localises to the nucleus. The protein resides in the cell membrane. Its function is as follows. Down-regulates signaling from heterotrimeric G-proteins by increasing the GTPase activity of the alpha subunits, thereby driving them into their inactive GDP-bound form. Down-regulates G-protein-mediated release of inositol phosphates and activation of MAP kinases. The polypeptide is Regulator of G-protein signaling 3 (RGS3) (Homo sapiens (Human)).